We begin with the raw amino-acid sequence, 936 residues long: Phosphoenolpyruvate carboxylase (936 aa).

A disordered region spans residues 1-20 (MSSLNLSAGPEPVSERPDDA). Catalysis depends on residues H164 and K598.

The protein belongs to the PEPCase type 1 family. It depends on Mg(2+) as a cofactor.

The enzyme catalyses oxaloacetate + phosphate = phosphoenolpyruvate + hydrogencarbonate. In terms of biological role, forms oxaloacetate, a four-carbon dicarboxylic acid source for the tricarboxylic acid cycle. In Rhodopseudomonas palustris (strain ATCC BAA-98 / CGA009), this protein is Phosphoenolpyruvate carboxylase (ppc).